Reading from the N-terminus, the 764-residue chain is 5-methyltetrahydropteroyltriglutamate--homocysteine methyltransferase (764 aa).

5-methyltetrahydropteroyltri-L-glutamate-binding positions include 16–19 (RELK) and lysine 121. Residues 440–442 (IGS) and glutamate 493 contribute to the L-homocysteine site. Residues 440 to 442 (IGS) and glutamate 493 each bind L-methionine. 5-methyltetrahydropteroyltri-L-glutamate-binding positions include 524-525 (RC) and tryptophan 570. Residue aspartate 608 coordinates L-homocysteine. Aspartate 608 contributes to the L-methionine binding site. 5-methyltetrahydropteroyltri-L-glutamate is bound at residue glutamate 614. Zn(2+) contacts are provided by histidine 650, cysteine 652, and glutamate 674. Histidine 703 serves as the catalytic Proton donor. Cysteine 735 serves as a coordination point for Zn(2+).

The protein belongs to the vitamin-B12 independent methionine synthase family. Requires Zn(2+) as cofactor.

The catalysed reaction is 5-methyltetrahydropteroyltri-L-glutamate + L-homocysteine = tetrahydropteroyltri-L-glutamate + L-methionine. Its pathway is amino-acid biosynthesis; L-methionine biosynthesis via de novo pathway; L-methionine from L-homocysteine (MetE route): step 1/1. Its function is as follows. Catalyzes the transfer of a methyl group from 5-methyltetrahydrofolate to homocysteine resulting in methionine formation. The chain is 5-methyltetrahydropteroyltriglutamate--homocysteine methyltransferase from Burkholderia ambifaria (strain ATCC BAA-244 / DSM 16087 / CCUG 44356 / LMG 19182 / AMMD) (Burkholderia cepacia (strain AMMD)).